Reading from the N-terminus, the 265-residue chain is uncharacterized protein (265 aa).

A helical; Signal-anchor for type II membrane protein transmembrane segment spans residues 3 to 23 (KKTWVYIIIAIIIILLLVWYF). Residues Asn37 and Asn125 are each glycosylated (N-linked (GlcNAc...) asparagine; by host). Positions 37 to 94 (NQTYNMLQQQISSLNQQILFLKQQISNLHVPAPTSTVNSLRQTVSDINQQVSTINNQI) form a coiled coil. A coiled-coil region spans residues 158 to 257 (NVADNELNVL…KNSLGSAVRN (100 aa)).

Its subcellular location is the host membrane. The protein localises to the virion. This is an uncharacterized protein from Acanthamoeba polyphaga (Amoeba).